A 152-amino-acid chain; its full sequence is Ribosomal RNA large subunit methyltransferase H (152 aa).

S-adenosyl-L-methionine is bound by residues Leu65, Gly96, and 115-120; that span reads LGPMTW.

This sequence belongs to the RNA methyltransferase RlmH family. As to quaternary structure, homodimer.

The protein resides in the cytoplasm. The catalysed reaction is pseudouridine(1915) in 23S rRNA + S-adenosyl-L-methionine = N(3)-methylpseudouridine(1915) in 23S rRNA + S-adenosyl-L-homocysteine + H(+). In terms of biological role, specifically methylates the pseudouridine at position 1915 (m3Psi1915) in 23S rRNA. The sequence is that of Ribosomal RNA large subunit methyltransferase H from Gluconacetobacter diazotrophicus (strain ATCC 49037 / DSM 5601 / CCUG 37298 / CIP 103539 / LMG 7603 / PAl5).